Here is a 325-residue protein sequence, read N- to C-terminus: Melanocortin receptor 5 (325 aa).

Topologically, residues 1–37 are extracellular; sequence MNSSFHLHFLDLGLNATEGNLSGLSVRNASSPCEDMG. 4 N-linked (GlcNAc...) asparagine glycosylation sites follow: Asn-2, Asn-15, Asn-20, and Asn-28. The helical transmembrane segment at 38–61 threads the bilayer; that stretch reads IAVEVFLALGLISLLENILVIGAI. The Cytoplasmic segment spans residues 62 to 73; it reads VRNRNLHIPMYF. The chain crosses the membrane as a helical span at residues 74–97; that stretch reads FVGSLAVADMLVSLSNFWETITIY. The Extracellular segment spans residues 98–114; that stretch reads LLTNKHLVMADASVRHL. Residues 115-138 form a helical membrane-spanning segment; that stretch reads DNVFDSMICISVVASMCSLLAIAV. Residues 139-155 lie on the Cytoplasmic side of the membrane; the sequence is DRYVTIFCRLRYQRIMT. Residues 156–179 form a helical membrane-spanning segment; the sequence is GRRSGAIIAGIWAFCTSCGTVFIV. Over 180 to 186 the chain is Extracellular; sequence YYESTYV. Residues 187-211 traverse the membrane as a helical segment; it reads VVCLIAMFLTMLLLMASLYTHMFLL. The Cytoplasmic portion of the chain corresponds to 212 to 239; sequence ARTHVRRIAALPGHSSVRQRTGVKGAIT. Residues 240-265 traverse the membrane as a helical segment; sequence LAMLLGVFIICWAPFFLHLILMISCP. The Extracellular segment spans residues 266-273; it reads QNLYCSCF. A helical transmembrane segment spans residues 274-297; that stretch reads MSHFNMYLILIMCNSVIDPLIYAF. At 298-325 the chain is on the cytoplasmic side; that stretch reads RSQEMRKTFKEIVCFQGFRTPCRFPSTY. Cys-311 carries S-palmitoyl cysteine lipidation.

It belongs to the G-protein coupled receptor 1 family.

It localises to the cell membrane. Receptor for MSH (alpha, beta and gamma) and ACTH. The activity of this receptor is mediated by G proteins which activate adenylate cyclase. This receptor is a possible mediator of the immunomodulation properties of melanocortins. This is Melanocortin receptor 5 (MC5R) from Ovis aries (Sheep).